The following is a 368-amino-acid chain: Molybdenum import ATP-binding protein ModC (368 aa).

The 230-residue stretch at 1–230 folds into the ABC transporter domain; it reads MTIKIQFKQT…HAMRPWQSFS (230 aa). Position 32-39 (32-39) interacts with ATP; it reads GRSGAGKT. The Mop domain maps to 291–362; that stretch reads ATSIRNVLPA…VKGVSVTQRD (72 aa).

The protein belongs to the ABC transporter superfamily. Molybdate importer (TC 3.A.1.8) family. In terms of assembly, the complex is composed of two ATP-binding proteins (ModC), two transmembrane proteins (ModB) and a solute-binding protein (ModA).

The protein resides in the cell inner membrane. It carries out the reaction molybdate(out) + ATP + H2O = molybdate(in) + ADP + phosphate + H(+). Part of the ABC transporter complex ModABC involved in molybdenum import. Responsible for energy coupling to the transport system. In Vibrio parahaemolyticus serotype O3:K6 (strain RIMD 2210633), this protein is Molybdenum import ATP-binding protein ModC.